The chain runs to 229 residues: MAIGKRLKKAREGVDRTKLYPLDEAVKMVKERATSKFDETIEVALNLGVDPRHADQMVRGVVMLPNGTGRTLRVGVFARGAKADEAKAAGADVVGAEDLVEQVQGGNINFDRCIATPDMMPLVGRLGKVLGPRGMMPNPKIGTVTMDVAGAVKGAKGGSVEFRVEKAGIVQAGVGKASFTEEKLVENIKALADAVTKAKPTGAKGTYIQRVAVSSSMGPGVKVEPGSIH.

This sequence belongs to the universal ribosomal protein uL1 family. Part of the 50S ribosomal subunit.

Functionally, binds directly to 23S rRNA. The L1 stalk is quite mobile in the ribosome, and is involved in E site tRNA release. Protein L1 is also a translational repressor protein, it controls the translation of the L11 operon by binding to its mRNA. The chain is Large ribosomal subunit protein uL1 from Rhodopseudomonas palustris (strain BisB5).